The following is a 104-amino-acid chain: N(4)-acetylcytidine amidohydrolase (104 aa).

Residues 6–94 (ITFFQRFQND…IAEIYPNQTQ (89 aa)) enclose the ASCH domain. Catalysis depends on lysine 21, which acts as the Proton acceptor. Threonine 24 acts as the Nucleophile in catalysis. Glutamate 74 acts as the Proton donor in catalysis.

Belongs to the N(4)-acetylcytidine amidohydrolase family.

The catalysed reaction is N(4)-acetylcytidine + H2O = cytidine + acetate + H(+). It catalyses the reaction N(4)-acetyl-2'-deoxycytidine + H2O = 2'-deoxycytidine + acetate + H(+). The enzyme catalyses N(4)-acetylcytosine + H2O = cytosine + acetate + H(+). In terms of biological role, catalyzes the hydrolysis of N(4)-acetylcytidine (ac4C). In Salmonella agona (strain SL483), this protein is N(4)-acetylcytidine amidohydrolase (yqfB).